The primary structure comprises 479 residues: Glutamate receptor U1 (479 aa).

Residues 1-17 (MEKSLLFLFAVTLLSVG) form the signal peptide. Residues 18–163 (CTDAGESKGS…LFGFLTPFSK (146 aa)) are Extracellular-facing. N79 is a glycosylation site (N-linked (GlcNAc...) asparagine). Residues 164–184 (ETWIGILVAYMVTSLCLFLVG) form a helical membrane-spanning segment. Residues 185 to 229 (RLSPCEWTELSTEQNNFTFLNSLWFGAGAFTLQGAEPHPKSVSAR) are Cytoplasmic-facing. Residues 230 to 250 (IIAVIWWIFSIVLVAAYIASF) traverse the membrane as a helical segment. The Extracellular portion of the chain corresponds to 251-414 (AAFLNSDSVQ…AGWNPVQPHT (164 aa)). N282 carries an N-linked (GlcNAc...) asparagine glycan. Residues 415–435 (LGGIFLILGIGLALGVIAALI) form a helical membrane-spanning segment. The Cytoplasmic segment spans residues 436-479 (ELVLKARNNADQQKKSCCSAFSEEMGERLGTNKENQGAVDSVKS).

Belongs to the glutamate-gated ion channel (TC 1.A.10.1) family. As to quaternary structure, homomeric.

Its subcellular location is the cell membrane. The protein localises to the postsynaptic cell membrane. Functionally, receptor for glutamate. L-glutamate acts as an excitatory neurotransmitter at many synapses in the central nervous system. The postsynaptic actions of Glu are mediated by a variety of receptors that are named according to their selective agonists. This receptor binds domoate &gt; kainate &gt; AMPA &gt; NBQX &gt; glutamate. The chain is Glutamate receptor U1 (kbp) from Xenopus laevis (African clawed frog).